The sequence spans 510 residues: Light-independent protochlorophyllide reductase subunit B (510 aa).

Aspartate 36 contacts [4Fe-4S] cluster. Residue aspartate 296 is the Proton donor of the active site. A substrate-binding site is contributed by 431 to 432 (GM).

Belongs to the ChlB/BchB/BchZ family. As to quaternary structure, protochlorophyllide reductase is composed of three subunits; ChlL, ChlN and ChlB. Forms a heterotetramer of two ChlB and two ChlN subunits. Requires [4Fe-4S] cluster as cofactor.

It localises to the plastid. It is found in the chloroplast. The catalysed reaction is chlorophyllide a + oxidized 2[4Fe-4S]-[ferredoxin] + 2 ADP + 2 phosphate = protochlorophyllide a + reduced 2[4Fe-4S]-[ferredoxin] + 2 ATP + 2 H2O. It participates in porphyrin-containing compound metabolism; chlorophyll biosynthesis (light-independent). Component of the dark-operative protochlorophyllide reductase (DPOR) that uses Mg-ATP and reduced ferredoxin to reduce ring D of protochlorophyllide (Pchlide) to form chlorophyllide a (Chlide). This reaction is light-independent. The NB-protein (ChlN-ChlB) is the catalytic component of the complex. This is Light-independent protochlorophyllide reductase subunit B from Auxenochlorella protothecoides (Green microalga).